Here is a 246-residue protein sequence, read N- to C-terminus: 1-(5-phosphoribosyl)-5-[(5-phosphoribosylamino)methylideneamino] imidazole-4-carboxamide isomerase (246 aa).

Asp8 acts as the Proton acceptor in catalysis. Asp131 serves as the catalytic Proton donor.

This sequence belongs to the HisA/HisF family.

The protein resides in the cytoplasm. The catalysed reaction is 1-(5-phospho-beta-D-ribosyl)-5-[(5-phospho-beta-D-ribosylamino)methylideneamino]imidazole-4-carboxamide = 5-[(5-phospho-1-deoxy-D-ribulos-1-ylimino)methylamino]-1-(5-phospho-beta-D-ribosyl)imidazole-4-carboxamide. It functions in the pathway amino-acid biosynthesis; L-histidine biosynthesis; L-histidine from 5-phospho-alpha-D-ribose 1-diphosphate: step 4/9. In Bordetella petrii (strain ATCC BAA-461 / DSM 12804 / CCUG 43448), this protein is 1-(5-phosphoribosyl)-5-[(5-phosphoribosylamino)methylideneamino] imidazole-4-carboxamide isomerase.